We begin with the raw amino-acid sequence, 759 residues long: MAEGEDMQTFTSIMDALVRISTSMKNMEKELLCPVCQEMYKQPLVLPCTHNVCQACAREVLGQQGYIGHGGDPSSEPTSPASTPSTRSPRLSRRTLPKPDRLDRLLKSGFGTYPGRKRGALHPQTILFPCPACQGDVELGERGLSGLFRNLTLERVVERYRQSVSVGGAILCQLCKPPPLEATKGCSECRATFCNECFKLFHPWGTQKAQHEPTLPTLSFRPKGLMCPDHKEEVTHYCKTCQRLVCQLCRVRRTHSGHKITPVLSAYQALKDKLTKSLAYILGNQDTVQTQICELEETIRHTEVSGQQAKEEVSQLVRGLGAVLEEKRSSLLQAIEECQQERLSRLSAQIHEHQSLLDGSGLVGYAQEVLKETDQPCFVQAAKQLHNRIARATEALQTFRPAASSSFRHCQLDVGREMKLLTELNFLRVPEAPVIDTQRTFAYDQIFLCWRLPPHSPPAWHYTVEFRRTDVPAQPGPTRWQRREEVRGTSALLENPDTGSVYVLRVRGCNKAGYGEYSEDVHLHTPPAPVLHFFLDGRWGASRERLAISKDQRAVRSIPGLPLLLAAERLLTGCHLSVDVVLGDVAVTQGRSYWACAVDPASYLVKVGVGLESKLQESFQGAPDVISPRYDPDSGHDSGAEDAAVEALPPFAFLTIGMGKILLGSGASSNAGLTGRDGPAASCTVPLPPRLGICLDYERGRVSFLDAVSFRGLLECPLDCSGPVCPAFCFIGGGAVQLQEPVGTKPERKVTIGGFAKLD.

Residues 1–166 (MAEGEDMQTF…VERYRQSVSV (166 aa)) are required for proximal axon localization, axon formation and migration. Residues 33–59 (CPVCQEMYKQPLVLPCTHNVCQACARE) form an RING-type 1; degenerate zinc finger. Residues 67–98 (IGHGGDPSSEPTSPASTPSTRSPRLSRRTLPK) are disordered. The segment covering 73-89 (PSSEPTSPASTPSTRSP) has biased composition (low complexity). Residues 172 to 231 (CQLCKPPPLEATKGCSECRATFCNECFKLFHPWGTQKAQHEPTLPTLSFRPKGLMCPDHK) form an RING-type 2; degenerate zinc finger. A B box-type zinc finger spans residues 222-263 (PKGLMCPDHKEEVTHYCKTCQRLVCQLCRVRRTHSGHKITPV). The Zn(2+) site is built by C227, H230, C249, and H255. The stretch at 294 to 400 (ELEETIRHTE…RATEALQTFR (107 aa)) forms a coiled coil. S330 carries the post-translational modification Phosphoserine. The COS domain maps to 370 to 427 (LKETDQPCFVQAAKQLHNRIARATEALQTFRPAASSSFRHCQLDVGREMKLLTELNFL). Residues 411-429 (QLDVGREMKLLTELNFLRV) form a required for microtubule association, proximal axon localization and axon formation region. In terms of domain architecture, Fibronectin type-III spans 429–528 (VPEAPVIDTQ…EDVHLHTPPA (100 aa)). One can recognise a B30.2/SPRY domain in the interval 513–747 (GYGEYSEDVH…LQEPVGTKPE (235 aa)). S627 carries the phosphoserine modification.

This sequence belongs to the TRIM/RBCC family. As to quaternary structure, interacts with TUBB3 and TUBA4A. As to expression, expressed in primary hippocampal and cortical neurons.

The protein resides in the cell projection. The protein localises to the axon. It localises to the cytoplasm. It is found in the cytoskeleton. Microtubule-associated protein that is involved in the formation of parallel microtubule bundles linked by cross-bridges in the proximal axon. Required for the uniform orientation and maintenance of the parallel microtubule fascicles, which are important for efficient cargo delivery and trafficking in axons. Thereby also required for proper axon specification, the establishment of neuronal polarity and proper neuronal migration. In Rattus norvegicus (Rat), this protein is Tripartite motif-containing protein 46.